A 750-amino-acid polypeptide reads, in one-letter code: Photosystem I P700 chlorophyll a apoprotein A1 (750 aa).

The next 8 membrane-spanning stretches (helical) occupy residues 70 to 93 (VFSAHFGQLAIIFIWLSGMYFHGA), 156 to 179 (LYSTAIGGLVFAALMLFAGWFHYH), 195 to 219 (LNHHLAGLLGLGSLSWAGHQVHVSL), 291 to 309 (TAHHHLAIAVLFLVAGHMY), 346 to 369 (WHAQLALNLAMLGSLTIIVAHHMY), 385 to 411 (LSLFTHHMWIGGFLIVGAAAHAAIFMV), 433 to 455 (AIISHLNWVCIFLGFHSFGLYIH), and 531 to 549 (FLVHHIHAFTIHVTVLILL). [4Fe-4S] cluster is bound by residues Cys573 and Cys582. 2 helical membrane-spanning segments follow: residues 589 to 610 (HVFLGLFWMYNSISVVIFHFSW) and 664 to 686 (LSAYGLLFLGAHFVWAFSLMFLF). His675 contributes to the chlorophyll a' binding site. Residues Met683 and Tyr691 each coordinate chlorophyll a. Residue Trp692 coordinates phylloquinone. The chain crosses the membrane as a helical span at residues 724–744 (AVGVAHYLLGGIATTWAFFLA).

Belongs to the PsaA/PsaB family. As to quaternary structure, the PsaA/B heterodimer binds the P700 chlorophyll special pair and subsequent electron acceptors. PSI consists of a core antenna complex that captures photons, and an electron transfer chain that converts photonic excitation into a charge separation. The eukaryotic PSI reaction center is composed of at least 11 subunits. The cofactor is P700 is a chlorophyll a/chlorophyll a' dimer, A0 is one or more chlorophyll a, A1 is one or both phylloquinones and FX is a shared 4Fe-4S iron-sulfur center..

The protein resides in the plastid. It localises to the chloroplast thylakoid membrane. It carries out the reaction reduced [plastocyanin] + hnu + oxidized [2Fe-2S]-[ferredoxin] = oxidized [plastocyanin] + reduced [2Fe-2S]-[ferredoxin]. Its function is as follows. PsaA and PsaB bind P700, the primary electron donor of photosystem I (PSI), as well as the electron acceptors A0, A1 and FX. PSI is a plastocyanin-ferredoxin oxidoreductase, converting photonic excitation into a charge separation, which transfers an electron from the donor P700 chlorophyll pair to the spectroscopically characterized acceptors A0, A1, FX, FA and FB in turn. Oxidized P700 is reduced on the lumenal side of the thylakoid membrane by plastocyanin. The sequence is that of Photosystem I P700 chlorophyll a apoprotein A1 from Marchantia polymorpha (Common liverwort).